The primary structure comprises 40 residues: Ostricacin-3 (40 aa).

3 disulfide bridges follow: cysteine 8/cysteine 36, cysteine 15/cysteine 30, and cysteine 20/cysteine 37.

The protein resides in the secreted. In terms of biological role, has antibacterial activity against the Gram-positive bacterium S.aureus 1056 MRSA (MIC=2.78 ug/ml) and the Gram-negative bacterium E.coli O157:H7 (MIC=2.41 ug/ml). Does not have antifungal activity against the yeast C.albicans 3153A. The sequence is that of Ostricacin-3 from Struthio camelus (Common ostrich).